The chain runs to 361 residues: Palmitoyltransferase ZDHHC2 (361 aa).

Over 1–15 (MAPSGSRSFDCWRVL) the chain is Cytoplasmic. Residues 16-36 (YWIPVLFISLIVAWSYYAYVV) traverse the membrane as a helical segment. Residues 37-50 (QLCIETIENMGEKT) are Lumenal-facing. Residues 51 to 71 (VYLLIYHLLFLMFVWSYWQTI) traverse the membrane as a helical segment. Over 72-167 (YSKPMNPLKE…NNCVGFANYK (96 aa)) the chain is Cytoplasmic. A DHHC domain is found at 124–174 (RYCDRCLLLKPDRCHHCSACDMCILKMDHHCPWVNNCVGFANYKFFMLFLA). Cysteine 154 acts as the S-palmitoyl cysteine intermediate in catalysis. Residues 168 to 188 (FFMLFLAYSLLYCLFVTATDM) traverse the membrane as a helical segment. Residues 189-207 (QYFIQFWTNGLPDTQAKFH) lie on the Lumenal side of the membrane. A helical transmembrane segment spans residues 208 to 228 (IMFLFFAASTFSVSLAFLFAY). At 229–361 (HCWLVCKNRS…NPALTIEKET (133 aa)) the chain is on the cytoplasmic side. The segment at 296–361 (NPDPEQPSIP…NPALTIEKET (66 aa)) is mediates localization to plasma membrane and recycling endosomes. Residues 299-308 (PEQPSIPPGR) are compositionally biased toward pro residues. The tract at residues 299-361 (PEQPSIPPGR…NPALTIEKET (63 aa)) is disordered. Positions 331-340 (SRLLNNGQTD) are enriched in polar residues. The Non-canonical dileucine endocytic signal motif lies at 333–334 (LL). The NPxY-like endocytic signal motif lies at 352 to 355 (NPAL).

The protein belongs to the DHHC palmitoyltransferase family. Monomer. Homodimer. The monomeric form has a higher catalytic activity. Post-translationally, autopalmitoylated.

The protein resides in the endoplasmic reticulum membrane. It is found in the golgi apparatus membrane. The protein localises to the postsynaptic density. It localises to the postsynaptic recycling endosome membrane. Its subcellular location is the cell membrane. The catalysed reaction is L-cysteinyl-[protein] + hexadecanoyl-CoA = S-hexadecanoyl-L-cysteinyl-[protein] + CoA. It catalyses the reaction L-cysteinyl-[protein] + tetradecanoyl-CoA = S-tetradecanoyl-L-cysteinyl-[protein] + CoA. It carries out the reaction L-cysteinyl-[protein] + octadecanoyl-CoA = S-octadecanoyl-L-cysteinyl-[protein] + CoA. Functionally, palmitoyltransferase that catalyzes the addition of palmitate onto various protein substrates and is involved in a variety of cellular processes. Has no stringent fatty acid selectivity and in addition to palmitate can also transfer onto target proteins myristate from tetradecanoyl-CoA and stearate from octadecanoyl-CoA. This chain is Palmitoyltransferase ZDHHC2, found in Danio rerio (Zebrafish).